We begin with the raw amino-acid sequence, 481 residues long: UDP-N-acetylmuramoyl-L-alanyl-D-glutamate--L-lysine ligase (481 aa).

Residue Ser-42 coordinates UDP-N-acetyl-alpha-D-muramoyl-L-alanyl-D-glutamate. Residue 118 to 124 (GTKGKTT) participates in ATP binding. UDP-N-acetyl-alpha-D-muramoyl-L-alanyl-D-glutamate is bound by residues Gln-158, 160 to 161 (TT), Ser-187, and Arg-195. At Lys-229 the chain carries N6-carboxylysine. Positions 404 to 407 (DDPN) match the L-lysine recognition motif motif.

This sequence belongs to the MurCDEF family. MurE subfamily. In terms of processing, carboxylation is probably crucial for Mg(2+) binding and, consequently, for the gamma-phosphate positioning of ATP.

The protein resides in the cytoplasm. The enzyme catalyses UDP-N-acetyl-alpha-D-muramoyl-L-alanyl-D-glutamate + L-lysine + ATP = UDP-N-acetyl-alpha-D-muramoyl-L-alanyl-gamma-D-glutamyl-L-lysine + ADP + phosphate + H(+). It participates in cell wall biogenesis; peptidoglycan biosynthesis. Catalyzes the addition of L-lysine to the nucleotide precursor UDP-N-acetylmuramoyl-L-alanyl-D-glutamate (UMAG) in the biosynthesis of bacterial cell-wall peptidoglycan. In Streptococcus pyogenes serotype M28 (strain MGAS6180), this protein is UDP-N-acetylmuramoyl-L-alanyl-D-glutamate--L-lysine ligase.